Here is a 338-residue protein sequence, read N- to C-terminus: 1-aminocyclopropane-1-carboxylate deaminase (338 aa).

K51 is modified (N6-(pyridoxal phosphate)lysine). The active-site Nucleophile is S78.

The protein belongs to the ACC deaminase/D-cysteine desulfhydrase family. Homotrimer. Pyridoxal 5'-phosphate serves as cofactor.

It catalyses the reaction 1-aminocyclopropane-1-carboxylate + H2O = 2-oxobutanoate + NH4(+). Catalyzes a cyclopropane ring-opening reaction, the irreversible conversion of 1-aminocyclopropane-1-carboxylate (ACC) to ammonia and alpha-ketobutyrate. Allows growth on ACC as a nitrogen source. This Variovorax paradoxus protein is 1-aminocyclopropane-1-carboxylate deaminase.